The primary structure comprises 256 residues: tRNA (guanine-N(7)-)-methyltransferase (256 aa).

The interval 1–25 is disordered; sequence MVATGGQAQDQSQNQEPDVLNPTSA. Residues Gly-79, 102–103, 137–138, and Leu-157 each bind S-adenosyl-L-methionine; these read EI and NA. Residue Asp-160 is part of the active site. 235 to 237 is a binding site for S-adenosyl-L-methionine; sequence SEE.

The protein belongs to the class I-like SAM-binding methyltransferase superfamily. TrmB family.

It localises to the nucleus. The catalysed reaction is guanosine(46) in tRNA + S-adenosyl-L-methionine = N(7)-methylguanosine(46) in tRNA + S-adenosyl-L-homocysteine. It participates in tRNA modification; N(7)-methylguanine-tRNA biosynthesis. In terms of biological role, catalyzes the formation of N(7)-methylguanine at position 46 (m7G46) in tRNA. The chain is tRNA (guanine-N(7)-)-methyltransferase from Drosophila simulans (Fruit fly).